Here is a 253-residue protein sequence, read N- to C-terminus: Proteasome subunit alpha (253 aa).

Low complexity predominate over residues 232-242; the sequence is AAGASTAGEAG. The interval 232–253 is disordered; it reads AAGASTAGEAGSAEDEGSDDEK. Residues 243 to 253 are compositionally biased toward acidic residues; the sequence is SAEDEGSDDEK.

It belongs to the peptidase T1A family. The 20S proteasome core is composed of 14 alpha and 14 beta subunits that assemble into four stacked heptameric rings, resulting in a barrel-shaped structure. The two inner rings, each composed of seven catalytic beta subunits, are sandwiched by two outer rings, each composed of seven alpha subunits. The catalytic chamber with the active sites is on the inside of the barrel. Has a gated structure, the ends of the cylinder being occluded by the N-termini of the alpha-subunits. Is capped by the proteasome-associated ATPase, ARC.

It is found in the cytoplasm. It participates in protein degradation; proteasomal Pup-dependent pathway. The formation of the proteasomal ATPase ARC-20S proteasome complex, likely via the docking of the C-termini of ARC into the intersubunit pockets in the alpha-rings, may trigger opening of the gate for substrate entry. Interconversion between the open-gate and close-gate conformations leads to a dynamic regulation of the 20S proteasome proteolysis activity. Component of the proteasome core, a large protease complex with broad specificity involved in protein degradation. This chain is Proteasome subunit alpha, found in Streptomyces avermitilis (strain ATCC 31267 / DSM 46492 / JCM 5070 / NBRC 14893 / NCIMB 12804 / NRRL 8165 / MA-4680).